We begin with the raw amino-acid sequence, 126 residues long: Protein ApaG (126 aa).

The region spanning 2 to 126 (SALDTSIRVE…FRLATPGLLH (125 aa)) is the ApaG domain.

The chain is Protein ApaG from Shewanella baltica (strain OS223).